Reading from the N-terminus, the 311-residue chain is Ribosomal protein L11 methyltransferase (311 aa).

S-adenosyl-L-methionine is bound by residues T162, G183, D205, and N248.

It belongs to the methyltransferase superfamily. PrmA family.

It is found in the cytoplasm. The catalysed reaction is L-lysyl-[protein] + 3 S-adenosyl-L-methionine = N(6),N(6),N(6)-trimethyl-L-lysyl-[protein] + 3 S-adenosyl-L-homocysteine + 3 H(+). Its function is as follows. Methylates ribosomal protein L11. This is Ribosomal protein L11 methyltransferase from Bacillus licheniformis (strain ATCC 14580 / DSM 13 / JCM 2505 / CCUG 7422 / NBRC 12200 / NCIMB 9375 / NCTC 10341 / NRRL NRS-1264 / Gibson 46).